Reading from the N-terminus, the 270-residue chain is tRNA pseudouridine synthase A (270 aa).

The active-site Nucleophile is Asp-51. Residue Tyr-109 participates in substrate binding.

It belongs to the tRNA pseudouridine synthase TruA family. In terms of assembly, homodimer.

It catalyses the reaction uridine(38/39/40) in tRNA = pseudouridine(38/39/40) in tRNA. In terms of biological role, formation of pseudouridine at positions 38, 39 and 40 in the anticodon stem and loop of transfer RNAs. The protein is tRNA pseudouridine synthase A of Burkholderia mallei (strain ATCC 23344).